A 366-amino-acid chain; its full sequence is tRNA/tmRNA (uracil-C(5))-methyltransferase (366 aa).

Gln190, Tyr218, Asn223, Glu239, and Asp299 together coordinate S-adenosyl-L-methionine. Cys324 functions as the Nucleophile in the catalytic mechanism. Residue Glu358 is the Proton acceptor of the active site.

Belongs to the class I-like SAM-binding methyltransferase superfamily. RNA M5U methyltransferase family. TrmA subfamily.

The catalysed reaction is uridine(54) in tRNA + S-adenosyl-L-methionine = 5-methyluridine(54) in tRNA + S-adenosyl-L-homocysteine + H(+). It catalyses the reaction uridine(341) in tmRNA + S-adenosyl-L-methionine = 5-methyluridine(341) in tmRNA + S-adenosyl-L-homocysteine + H(+). In terms of biological role, dual-specificity methyltransferase that catalyzes the formation of 5-methyluridine at position 54 (m5U54) in all tRNAs, and that of position 341 (m5U341) in tmRNA (transfer-mRNA). This is tRNA/tmRNA (uracil-C(5))-methyltransferase from Citrobacter koseri (strain ATCC BAA-895 / CDC 4225-83 / SGSC4696).